We begin with the raw amino-acid sequence, 906 residues long: Aconitate hydratase A (906 aa).

[4Fe-4S] cluster is bound by residues C443, C509, and C512.

The protein belongs to the aconitase/IPM isomerase family. Monomer. [4Fe-4S] cluster is required as a cofactor.

The catalysed reaction is citrate = D-threo-isocitrate. It catalyses the reaction (2S,3R)-3-hydroxybutane-1,2,3-tricarboxylate = 2-methyl-cis-aconitate + H2O. Its pathway is carbohydrate metabolism; tricarboxylic acid cycle; isocitrate from oxaloacetate: step 2/2. It participates in organic acid metabolism; propanoate degradation. Its function is as follows. Involved in the catabolism of short chain fatty acids (SCFA) via the tricarboxylic acid (TCA)(acetyl degradation route) and probably via the 2-methylcitrate cycle I (propionate degradation route). Catalyzes the reversible isomerization of citrate to isocitrate via cis-aconitate. Could catalyze the hydration of 2-methyl-cis-aconitate to yield (2R,3S)-2-methylisocitrate. The apo form of AcnA functions as a RNA-binding regulatory protein. In Bradyrhizobium diazoefficiens (strain JCM 10833 / BCRC 13528 / IAM 13628 / NBRC 14792 / USDA 110), this protein is Aconitate hydratase A.